A 372-amino-acid chain; its full sequence is Aminomethyltransferase (372 aa).

This sequence belongs to the GcvT family. As to quaternary structure, the glycine cleavage system is composed of four proteins: P, T, L and H.

It catalyses the reaction N(6)-[(R)-S(8)-aminomethyldihydrolipoyl]-L-lysyl-[protein] + (6S)-5,6,7,8-tetrahydrofolate = N(6)-[(R)-dihydrolipoyl]-L-lysyl-[protein] + (6R)-5,10-methylene-5,6,7,8-tetrahydrofolate + NH4(+). Its function is as follows. The glycine cleavage system catalyzes the degradation of glycine. The chain is Aminomethyltransferase from Prochlorococcus marinus (strain NATL1A).